The following is a 214-amino-acid chain: cAMP-activated global transcriptional regulator Vfr (214 aa).

3',5'-cyclic AMP contacts are provided by residues 59–60 (RE), 73–75 (GEL), 87–88 (RS), 132–133 (TT), arginine 179, and arginine 185. An HTH crp-type domain is found at 142 to 214 (LDVTGRVART…GKTMVVFGTR (73 aa)). Residues 174-193 (RQEIGRIVGCSREMVGRVLK) constitute a DNA-binding region (H-T-H motif).

As to quaternary structure, homodimer.

Its function is as follows. Global cAMP-dependent transcriptional regulator that controls virulence gene expression by distinct cAMP-dependent and -independent mechanisms, which allow to fine tune its virulence program in response to specific host cues or environments. Controls the expression of many regulatory targets including type II, type III and type IV secretion systems, flagellar-mediated motility, and quorum sensing systems. Transcriptional control is exerted by binding to a well-characterized consensus site (5'-ANWWTGNGAWNYAGWTCACAT) within target promoters. Directly binds to the toxA upstream region to regulate exotoxin A production, to the lasR gene promoter to activate the las quorum-sensing system or to the exsA promoter to regulate type III secretion system. Autoregulates as well its own expression. This Pseudomonas aeruginosa (strain ATCC 15692 / DSM 22644 / CIP 104116 / JCM 14847 / LMG 12228 / 1C / PRS 101 / PAO1) protein is cAMP-activated global transcriptional regulator Vfr (vfr).